The following is a 389-amino-acid chain: Type II methyltransferase M2.BsuMI (389 aa).

The 299-residue stretch at 1 to 299 folds into the SAM-dependent MTase C5-type domain; the sequence is MKVVSLFSGI…ENLSQPKGSI (299 aa). Residue Cys-69 is part of the active site.

It belongs to the class I-like SAM-binding methyltransferase superfamily. C5-methyltransferase family. In terms of assembly, monomer. May form a complex with YdiP, also seems to be active alone.

It carries out the reaction a 2'-deoxycytidine in DNA + S-adenosyl-L-methionine = a 5-methyl-2'-deoxycytidine in DNA + S-adenosyl-L-homocysteine + H(+). Its activity is regulated as follows. Somewhat inhibited by MgCl(2) and spermidine, strongly inhibited by MnCl(2). Functionally, a methylase, recognizes the double-stranded sequence 5'-YTCGAR-3', methylates C-3 on both strands, and protects the DNA from cleavage by the BsuMI endonuclease. This is Type II methyltransferase M2.BsuMI (ydiP) from Bacillus subtilis (strain 168).